The chain runs to 285 residues: Inositol oxygenase (285 aa).

A substrate-binding site is contributed by Arg-29. At Ser-33 the chain carries Phosphoserine. A substrate-binding site is contributed by 85 to 87 (DES). 3 residues coordinate Fe cation: His-98, His-123, and Asp-124. Residues Lys-127 and 141–142 (GD) each bind substrate. Residues His-194, His-220, and Asp-253 each contribute to the Fe cation site. 220 to 221 (HS) is a substrate binding site.

It belongs to the myo-inositol oxygenase family. Fe cation serves as cofactor.

The protein resides in the cytoplasm. The enzyme catalyses myo-inositol + O2 = D-glucuronate + H2O + H(+). It participates in polyol metabolism; myo-inositol degradation into D-glucuronate; D-glucuronate from myo-inositol: step 1/1. The polypeptide is Inositol oxygenase (MIOX) (Pongo abelii (Sumatran orangutan)).